The following is a 440-amino-acid chain: Beta-1,3-galactosyl-O-glycosyl-glycoprotein beta-1,6-N-acetylglucosaminyltransferase 3 (440 aa).

The Cytoplasmic portion of the chain corresponds to 1–12 (MKMTGWKKKLCR). A helical; Signal-anchor for type II membrane protein membrane pass occupies residues 13-30 (GHHLWALGCYMLLAVVAL). Topologically, residues 31–440 (RLSLRLKCDV…RHKAIYGTEL (410 aa)) are lumenal. Disulfide bonds link Cys73–Cys230, Cys164–Cys384, Cys185–Cys212, and Cys393–Cys425. A glycan (N-linked (GlcNAc...) asparagine) is linked at Asn108.

The protein belongs to the glycosyltransferase 14 family. Post-translationally, N-glycosylated.

Its subcellular location is the golgi apparatus membrane. The catalysed reaction is a 3-O-[beta-D-galactosyl-(1-&gt;3)-N-acetyl-alpha-D-galactosaminyl]-L-seryl-[protein] + UDP-N-acetyl-alpha-D-glucosamine = 3-O-{beta-D-galactosyl-(1-&gt;3)-[N-acetyl-beta-D-glucosaminyl-(1-&gt;6)]-N-acetyl-alpha-D-galactosaminyl}-L-seryl-[protein] + UDP + H(+). The enzyme catalyses a 3-O-[beta-D-galactosyl-(1-&gt;3)-N-acetyl-alpha-D-galactosaminyl]-L-threonyl-[protein] + UDP-N-acetyl-alpha-D-glucosamine = a 3-O-{beta-D-galactosyl-(1-&gt;3)-[N-acetyl-beta-D-glucosaminyl-(1-&gt;6)]-N-acetyl-alpha-D-galactosaminyl}-L-threonyl-[protein] + UDP + H(+). It catalyses the reaction a beta-D-Gal-(1-&gt;4)-beta-D-GlcNAc-(1-&gt;3)-beta-D-Gal-(1-&gt;4)-beta-D-GlcNAc derivative + UDP-N-acetyl-alpha-D-glucosamine = a beta-D-Gal-(1-&gt;4)-beta-D-GlcNAc-(1-&gt;3)-[beta-D-GlcNAc-(1-&gt;6)]-beta-D-Gal-(1-&gt;4)-N-acetyl-beta-D-glucosaminyl derivative + UDP + H(+). It carries out the reaction 3-O-[N-acetyl-beta-D-glucosaminyl-(1-&gt;3)-N-acetyl-alpha-D-galactosaminyl]-L-seryl-[protein] + UDP-N-acetyl-alpha-D-glucosamine = 3-O-[N-acetyl-beta-D-glucosaminyl-(1-&gt;3)-[N-acetyl-beta-D-glucosaminyl-(1-&gt;6)]-N-acetyl-alpha-D-galactosaminyl]-L-seryl-[protein] + UDP + H(+). The catalysed reaction is a 3-O-[N-acetyl-beta-D-glucosaminyl-(1-&gt;3)-N-acetyl-alpha-D-galactosaminyl]-L-threonyl-[protein] + UDP-N-acetyl-alpha-D-glucosamine = 3-O-[N-acetyl-beta-D-glucosaminyl-(1-&gt;3)-[N-acetyl-beta-D-glucosaminyl-(1-&gt;6)]-N-acetyl-alpha-D-galactosaminyl]-L-threonyl-[protein] + UDP + H(+). It functions in the pathway protein modification; protein glycosylation. Functionally, glycosyltransferase that can synthesize all known mucin beta 6 N-acetylglucosaminides. Mediates core 2 and core 4 O-glycan branching, 2 important steps in mucin-type biosynthesis. Also has I-branching enzyme activity by converting linear into branched poly-N-acetyllactosaminoglycans, leading to introduce the blood group I antigen during embryonic development. The chain is Beta-1,3-galactosyl-O-glycosyl-glycoprotein beta-1,6-N-acetylglucosaminyltransferase 3 (GCNT3) from Ovis aries (Sheep).